We begin with the raw amino-acid sequence, 311 residues long: MALPILLDCDPGHDDAIAIVLALASPELDVKAITSSAGNQTPEKTLRNVLRMLTLLNRTDIPVASGAVKPLMRDLIIADNVHGESGLDGPALPEPTFAPQNCTAVELMAKTLRESAEPVTIVSTGPQTNVALLLNSHPELHSKIARIVIMGGAMGLGNWTPAAEFNIYVDPEAAEIVFQSGIPVVMAGLDVTHKAQIHVEDTERFRAIGNPVSTIVAELLDFFLEYHKDEKWGFVGAPLHDPCTIAWLLKPELFTTVERWVGVETQGKYTQGMTVVDYYYLTGNKPNATVMVDVDRQGFVDLLAERLKFYA.

Histidine 240 is an active-site residue.

This sequence belongs to the IUNH family. RihA subfamily.

Hydrolyzes with equal efficiency cytidine or uridine to ribose and cytosine or uracil, respectively. This chain is Pyrimidine-specific ribonucleoside hydrolase RihA, found in Escherichia coli O7:K1 (strain IAI39 / ExPEC).